A 790-amino-acid chain; its full sequence is Ribonucleoside-diphosphate reductase large subunit (790 aa).

Residues Thr-208, 223–224 (SC), Gly-254, 436–440 (NLCTE), and 621–625 (PTVSS) each bind substrate. Residues Cys-224 and Cys-453 are joined by a disulfide bond. Asn-436 acts as the Proton acceptor in catalysis. The Cysteine radical intermediate role is filled by Cys-438. Glu-440 acts as the Proton acceptor in catalysis.

The protein belongs to the ribonucleoside diphosphate reductase large chain family. Heterotetramer composed of a homodimer of the large subunit (R1) and a homodimer of the small subunit (R2). Larger multisubunit protein complex are also active, composed of (R1)n(R2)n.

It carries out the reaction a 2'-deoxyribonucleoside 5'-diphosphate + [thioredoxin]-disulfide + H2O = a ribonucleoside 5'-diphosphate + [thioredoxin]-dithiol. Its function is as follows. Ribonucleoside-diphosphate reductase holoenzyme provides the precursors necessary for viral DNA synthesis. Allows virus growth in non-dividing cells, as well as reactivation from latency in infected hosts. Catalyzes the biosynthesis of deoxyribonucleotides from the corresponding ribonucleotides. This chain is Ribonucleoside-diphosphate reductase large subunit, found in Equus caballus (Horse).